The following is a 117-amino-acid chain: Larval cuticle protein A2B (117 aa).

Copy 1 of the repeat occupies 12–15 (AAPV). The Chitin-binding type R&amp;R domain maps to 29–95 (HPQYQYGYDV…AVVHREPLVA (67 aa)). Residues 108-111 (AAPV) form repeat 2.

Its function is as follows. Component of the cuticle of the larva of Tenebrio molitor. This chain is Larval cuticle protein A2B, found in Tenebrio molitor (Yellow mealworm beetle).